The sequence spans 468 residues: GTPase Der (468 aa).

EngA-type G domains follow at residues 3–167 and 179–352; these read PTLV…PYAE and PVIA…TAAM. GTP-binding positions include 9 to 16, 56 to 60, 119 to 122, 185 to 192, 232 to 236, and 297 to 300; these read GRPNVGKS, DTGGF, NKAE, DTAGL, and NKWD. Residues 353–437 form the KH-like domain; that stretch reads AHIPTPKLTR…PLRVEFRTGH (85 aa). A disordered region spans residues 434–468; the sequence is RTGHNPYAGKKAPPLTEEEARRAHSRRRRNRKKYG. Residues 456–468 are compositionally biased toward basic residues; the sequence is AHSRRRRNRKKYG.

This sequence belongs to the TRAFAC class TrmE-Era-EngA-EngB-Septin-like GTPase superfamily. EngA (Der) GTPase family. As to quaternary structure, associates with the 50S ribosomal subunit.

In terms of biological role, GTPase that plays an essential role in the late steps of ribosome biogenesis. The chain is GTPase Der from Nitrosomonas eutropha (strain DSM 101675 / C91 / Nm57).